A 208-amino-acid polypeptide reads, in one-letter code: Pyridoxine/pyridoxamine 5'-phosphate oxidase (208 aa).

FMN contacts are provided by residues arginine 55–lysine 60, tyrosine 70–threonine 71, lysine 76, lysine 77, and glutamine 99. A substrate-binding site is contributed by lysine 60. 3 residues coordinate substrate: tyrosine 117, arginine 121, and serine 125. Residues glutamine 134–serine 135 and tryptophan 179 each bind FMN. Arginine 185–histidine 187 is a substrate binding site. Residue arginine 189 participates in FMN binding.

The protein belongs to the pyridoxamine 5'-phosphate oxidase family. As to quaternary structure, homodimer. Requires FMN as cofactor.

The enzyme catalyses pyridoxamine 5'-phosphate + O2 + H2O = pyridoxal 5'-phosphate + H2O2 + NH4(+). It catalyses the reaction pyridoxine 5'-phosphate + O2 = pyridoxal 5'-phosphate + H2O2. The protein operates within cofactor metabolism; pyridoxal 5'-phosphate salvage; pyridoxal 5'-phosphate from pyridoxamine 5'-phosphate: step 1/1. It functions in the pathway cofactor metabolism; pyridoxal 5'-phosphate salvage; pyridoxal 5'-phosphate from pyridoxine 5'-phosphate: step 1/1. Catalyzes the oxidation of either pyridoxine 5'-phosphate (PNP) or pyridoxamine 5'-phosphate (PMP) into pyridoxal 5'-phosphate (PLP). In Brucella ovis (strain ATCC 25840 / 63/290 / NCTC 10512), this protein is Pyridoxine/pyridoxamine 5'-phosphate oxidase.